Here is a 408-residue protein sequence, read N- to C-terminus: MKNQLIDRLTRYTTIDTQSDPKSTTTPSTEKQWDLLHLLEKELQQLGLPTDLDENGYLFATLESNIDADVPTVGFLAHVDTSPDFNASNVKPQIIENYDGKPYKLGNTKRVLDPKVFPELNSLVGHTLMVTDGTSLLGADDKAGIVEIMEAICYLQEHPEIKHGTIRIGFTPDEEIGRGPHKFDVDRFNADFAYTMDGSQYGELQYESFNAAEAVITCHGVNVHPGSAKNAMVNAIRLGEQFDSLLPDSEVPERTEGYEGFYHLMNFEGTVEKATLQYIIRDHDKKQFELRKKRILEIRDDINAHFENYPVKVDISDQYFNMAEKILPLPHIIDIPKRVFAKLDIPANTEPIRGGTDGSQLSFMGLPTPNIFTGCGNFHGPYEYASIDVMEKAVQVIIGIVEDTAENN.

H78 contacts Zn(2+). D80 is an active-site residue. D140 serves as a coordination point for Zn(2+). E174 acts as the Proton acceptor in catalysis. The Zn(2+) site is built by E175, D197, and H379.

It belongs to the peptidase M20B family. Zn(2+) serves as cofactor.

Its subcellular location is the cytoplasm. It carries out the reaction Release of the N-terminal residue from a tripeptide.. Its function is as follows. Cleaves the N-terminal amino acid of tripeptides. In Staphylococcus aureus (strain MRSA252), this protein is Peptidase T.